We begin with the raw amino-acid sequence, 656 residues long: F-box/LRR-repeat protein 10 (656 aa).

The 47-residue stretch at 20-66 (ERSLDLLPAALLETIMTKLDVASLCSLASTCKTLKSCVTRVLTFTPN) folds into the F-box domain. LRR repeat units lie at residues 71-96 (NVSLSMETVRPLLFPNQQLSSLKLDC), 120-145 (CRDFSGDLISEIGRKCKDLRLLCLGS), 151-176 (GRSISRCALEDLLNGCSHLEVLALMF), 194-221 (SDRLTHLELGHITSRMMTQLLTSTEISG), 243-268 (VDCITDAVVKAISKSLPSLIDLDIRD), 277-301 (VSDLTDFGLHEINQNGKLKHLSLIR), 310-335 (FRRVSDQGMLFLADKCLGMETICLGG), 336-361 (FCRVTDAGFKTILHSCASLSKFSIYH), 362-387 (GPKLTDLVFHDILATTLSLSHVSLRR), 388-412 (CHLLTDHAIQKLASSLKLENLDLRG), 413-437 (CRNLRDETLTAVSHLPKLKVLLLDG), 439-463 (DISDTGLSYLKEGVLDSLVSLSVRG), 464-491 (CRNLTDKFMSTLFDGSSKLALRELDLSN), 492-517 (LPNLTDAAIFALAKSGAPITKLQLRE), 518-551 (CRLIGDASVMALASTRVYEDECPGSSLCLLDLYD), and 552-578 (CGGITQLSFKWLKKPFFPRLKWLGITG). The segment at 632 to 656 (ILGDEGDVEMEDAEDESEEDASEED) is disordered.

This chain is F-box/LRR-repeat protein 10 (FBL10), found in Arabidopsis thaliana (Mouse-ear cress).